The chain runs to 569 residues: Neutral leucine aminopeptidase, chloroplastic (569 aa).

The N-terminal 48 residues, 1 to 48 (MNGVLCSSSSSFHSYPSIFTKFQSSPIWSFSISVTPLCSRRAKRMAHS), are a transit peptide targeting the chloroplast. Mn(2+) contacts are provided by K339 and D344. Residue K351 is part of the active site. Residues D364, D424, and E426 each contribute to the Mn(2+) site. Residue R428 is part of the active site.

It belongs to the peptidase M17 family. In terms of assembly, homohexamer (dimer of homotrimers). Mn(2+) serves as cofactor. Expressed constitutively at low levels. Expressed in vegetative and reproductive organs, including leaves, stems, roots, cotyledons (after imbibition), pistils, sepals, petals, stamens, and floral buds (at protein level). Present at very low levels in healthy leaves.

It is found in the plastid. Its subcellular location is the chloroplast. It catalyses the reaction Release of an N-terminal amino acid, Xaa-|-Yaa-, in which Xaa is preferably Leu, but may be other amino acids including Pro although not Arg or Lys, and Yaa may be Pro. Amino acid amides and methyl esters are also readily hydrolyzed, but rates on arylamides are exceedingly low.. The catalysed reaction is Release of N-terminal proline from a peptide.. Its function is as follows. Catalyzes the removal of unsubstituted N-terminal amino acids from various peptides. When associated as homohexamer, catalyzes the proteolyzes of Xaa-Leu dipeptides. Possesses leucine aminopeptidase activity against the model substrate leucine-amido methyl coumarin. Presumably involved in the processing and regular turnover of intracellular proteins. Functionally, functions as a molecular chaperone to protect proteins from heat-induced damage. This is Neutral leucine aminopeptidase, chloroplastic from Solanum lycopersicum (Tomato).